Here is a 128-residue protein sequence, read N- to C-terminus: Large ribosomal subunit protein bL17 (128 aa).

This sequence belongs to the bacterial ribosomal protein bL17 family. In terms of assembly, part of the 50S ribosomal subunit. Contacts protein L32.

The chain is Large ribosomal subunit protein bL17 from Pseudomonas fluorescens (strain Pf0-1).